Consider the following 211-residue polypeptide: Urease accessory protein UreG (211 aa).

GTP is bound at residue 11–18 (GPVGSGKT).

This sequence belongs to the SIMIBI class G3E GTPase family. UreG subfamily. Homodimer. UreD, UreF and UreG form a complex that acts as a GTP-hydrolysis-dependent molecular chaperone, activating the urease apoprotein by helping to assemble the nickel containing metallocenter of UreC. The UreE protein probably delivers the nickel.

It localises to the cytoplasm. In terms of biological role, facilitates the functional incorporation of the urease nickel metallocenter. This process requires GTP hydrolysis, probably effectuated by UreG. The chain is Urease accessory protein UreG from Photorhabdus laumondii subsp. laumondii (strain DSM 15139 / CIP 105565 / TT01) (Photorhabdus luminescens subsp. laumondii).